Here is a 117-residue protein sequence, read N- to C-terminus: Large ribosomal subunit protein eL30B (117 aa).

Over residues 1–14 the composition is skewed to low complexity; the sequence is MSAAPTTAPVAAVS. The tract at residues 1–22 is disordered; sequence MSAAPTTAPVAAVSKKGKKSGD.

Belongs to the eukaryotic ribosomal protein eL30 family. As to quaternary structure, component of the large ribosomal subunit (LSU). Mature yeast ribosomes consist of a small (40S) and a large (60S) subunit. The 40S small subunit contains 1 molecule of ribosomal RNA (18S rRNA) and at least 33 different proteins. The large 60S subunit contains 3 rRNA molecules (25S, 5.8S and 5S rRNA) and at least 46 different proteins.

The protein resides in the cytoplasm. Functionally, component of the ribosome, a large ribonucleoprotein complex responsible for the synthesis of proteins in the cell. The small ribosomal subunit (SSU) binds messenger RNAs (mRNAs) and translates the encoded message by selecting cognate aminoacyl-transfer RNA (tRNA) molecules. The large subunit (LSU) contains the ribosomal catalytic site termed the peptidyl transferase center (PTC), which catalyzes the formation of peptide bonds, thereby polymerizing the amino acids delivered by tRNAs into a polypeptide chain. The nascent polypeptides leave the ribosome through a tunnel in the LSU and interact with protein factors that function in enzymatic processing, targeting, and the membrane insertion of nascent chains at the exit of the ribosomal tunnel. This is Large ribosomal subunit protein eL30B (rpl3002) from Schizosaccharomyces pombe (strain 972 / ATCC 24843) (Fission yeast).